A 403-amino-acid chain; its full sequence is Argininosuccinate synthase (403 aa).

ATP is bound by residues 13-21 (AYSGGLDTS) and Ala-40. Residues Tyr-91 and Ser-96 each contribute to the L-citrulline site. Gly-121 is a binding site for ATP. L-aspartate is bound by residues Thr-123, Asn-127, and Asp-128. Position 127 (Asn-127) interacts with L-citrulline. L-citrulline-binding residues include Arg-131, Ser-180, Ser-189, Glu-265, and Tyr-277.

The protein belongs to the argininosuccinate synthase family. Type 1 subfamily. As to quaternary structure, homotetramer.

The protein resides in the cytoplasm. It catalyses the reaction L-citrulline + L-aspartate + ATP = 2-(N(omega)-L-arginino)succinate + AMP + diphosphate + H(+). It functions in the pathway amino-acid biosynthesis; L-arginine biosynthesis; L-arginine from L-ornithine and carbamoyl phosphate: step 2/3. In Leptospira interrogans serogroup Icterohaemorrhagiae serovar copenhageni (strain Fiocruz L1-130), this protein is Argininosuccinate synthase.